We begin with the raw amino-acid sequence, 385 residues long: Photoreceptor ankyrin repeat protein (385 aa).

ANK repeat units follow at residues 17 to 46 (CNLK…SPEE), 53 to 83 (NGRT…DVNQ), 87 to 116 (DGNT…GLDL), 122 to 151 (RGLT…DLSS), and 156 to 190 (RGKT…QLSL). The segment at 270–385 (LGTRGKSVPE…GGLGQAGGSK (116 aa)) is disordered. Pro residues predominate over residues 284–297 (APPPPPEPHPPQQV). Residues 304–326 (APNQSPQSMFSQWLQSRDSTRSQ) are compositionally biased toward polar residues. Residues 361-373 (FQERKKKEEETEP) show a composition bias toward basic and acidic residues. A compositionally biased stretch (gly residues) spans 374–385 (RGGGLGQAGGSK).

Isoform 1: Expressed predominantly in the retina. Isoform 2: Expressed in the pineal gland.

The protein resides in the cytoplasm. It localises to the cytosol. It is found in the nucleus. Acts as a transcriptional repressor for CRX-activated photoreceptor gene regulation. This Mus musculus (Mouse) protein is Photoreceptor ankyrin repeat protein.